Here is a 180-residue protein sequence, read N- to C-terminus: UPF0149 protein XOO1028 (180 aa).

Belongs to the UPF0149 family.

The sequence is that of UPF0149 protein XOO1028 from Xanthomonas oryzae pv. oryzae (strain MAFF 311018).